The chain runs to 246 residues: Orotidine 5'-phosphate decarboxylase (246 aa).

Residues Asp22, Lys44, 71-80, Thr131, Arg192, Gln201, Gly221, and Arg222 contribute to the substrate site; that span reads DLKFHDIPNT. Lys73 serves as the catalytic Proton donor.

This sequence belongs to the OMP decarboxylase family. Type 1 subfamily. Homodimer.

The catalysed reaction is orotidine 5'-phosphate + H(+) = UMP + CO2. Its pathway is pyrimidine metabolism; UMP biosynthesis via de novo pathway; UMP from orotate: step 2/2. Functionally, catalyzes the decarboxylation of orotidine 5'-monophosphate (OMP) to uridine 5'-monophosphate (UMP). In Enterobacter sp. (strain 638), this protein is Orotidine 5'-phosphate decarboxylase.